The primary structure comprises 167 residues: ATP synthase subunit b (167 aa).

The helical transmembrane segment at 8–28 (AEAEFWVGAGLLIFLGIVFFG) threads the bilayer.

This sequence belongs to the ATPase B chain family. As to quaternary structure, F-type ATPases have 2 components, F(1) - the catalytic core - and F(0) - the membrane proton channel. F(1) has five subunits: alpha(3), beta(3), gamma(1), delta(1), epsilon(1). F(0) has three main subunits: a(1), b(2) and c(10-14). The alpha and beta chains form an alternating ring which encloses part of the gamma chain. F(1) is attached to F(0) by a central stalk formed by the gamma and epsilon chains, while a peripheral stalk is formed by the delta and b chains.

The protein resides in the cell inner membrane. In terms of biological role, f(1)F(0) ATP synthase produces ATP from ADP in the presence of a proton or sodium gradient. F-type ATPases consist of two structural domains, F(1) containing the extramembraneous catalytic core and F(0) containing the membrane proton channel, linked together by a central stalk and a peripheral stalk. During catalysis, ATP synthesis in the catalytic domain of F(1) is coupled via a rotary mechanism of the central stalk subunits to proton translocation. Its function is as follows. Component of the F(0) channel, it forms part of the peripheral stalk, linking F(1) to F(0). This chain is ATP synthase subunit b, found in Phenylobacterium zucineum (strain HLK1).